A 1145-amino-acid chain; its full sequence is DNA-directed RNA polymerase subunit beta (1145 aa).

A compositionally biased stretch (basic and acidic residues) spans 1101-1112 (LPEERRVSSSKE). Residues 1101–1145 (LPEERRVSSSKEEIEEEEEVEDNSDEFDETFLEEAEDDFSLDDED) form a disordered region. A compositionally biased stretch (acidic residues) spans 1113–1145 (EIEEEEEVEDNSDEFDETFLEEAEDDFSLDDED).

This sequence belongs to the RNA polymerase beta chain family. The RNAP catalytic core consists of 2 alpha, 1 beta, 1 beta' and 1 omega subunit. When a sigma factor is associated with the core the holoenzyme is formed, which can initiate transcription.

It catalyses the reaction RNA(n) + a ribonucleoside 5'-triphosphate = RNA(n+1) + diphosphate. Functionally, DNA-dependent RNA polymerase catalyzes the transcription of DNA into RNA using the four ribonucleoside triphosphates as substrates. In Desulforamulus reducens (strain ATCC BAA-1160 / DSM 100696 / MI-1) (Desulfotomaculum reducens), this protein is DNA-directed RNA polymerase subunit beta.